The sequence spans 201 residues: Proteasome subunit beta type-2 (201 aa).

Methionine 1 bears the N-acetylmethionine mark.

It belongs to the peptidase T1B family. In terms of assembly, the 26S proteasome consists of a 20S proteasome core and two 19S regulatory subunits. The 20S proteasome core is a barrel-shaped complex made of 28 subunits that are arranged in four stacked rings. The two outer rings are each formed by seven alpha subunits, and the two inner rings are formed by seven beta subunits. The proteolytic activity is exerted by three beta-subunits PSMB5, PSMB6 and PSMB7. In terms of tissue distribution, detected in liver (at protein level).

Its subcellular location is the cytoplasm. It is found in the nucleus. Non-catalytic component of the 20S core proteasome complex involved in the proteolytic degradation of most intracellular proteins. This complex plays numerous essential roles within the cell by associating with different regulatory particles. Associated with two 19S regulatory particles, forms the 26S proteasome and thus participates in the ATP-dependent degradation of ubiquitinated proteins. The 26S proteasome plays a key role in the maintenance of protein homeostasis by removing misfolded or damaged proteins that could impair cellular functions, and by removing proteins whose functions are no longer required. Associated with the PA200 or PA28, the 20S proteasome mediates ubiquitin-independent protein degradation. This type of proteolysis is required in several pathways including spermatogenesis (20S-PA200 complex) or generation of a subset of MHC class I-presented antigenic peptides (20S-PA28 complex). The protein is Proteasome subunit beta type-2 (Psmb2) of Mus musculus (Mouse).